We begin with the raw amino-acid sequence, 573 residues long: DNA polymerase lambda (573 aa).

The BRCT domain occupies 35 to 131 (EARGWLSSLR…RLTDTEGFSL (97 aa)). 2 disordered regions span residues 126–204 (TEGF…GPQV) and 214–233 (TGHY…APEA). The segment at 263 to 277 (KAYSVQGDKWRALGY) is DNA-binding. Lysine 310 functions as the Schiff-base intermediate with DNA in the catalytic mechanism. The tract at residues 343-346 (GTKT) is DNA-binding. DCTP contacts are provided by residues arginine 384, 415 to 418 (SYRR), and 424 to 427 (GDVD). Positions 418–427 (RGKMTCGDVD) are involved in primer binding. Residues aspartate 425, aspartate 427, and aspartate 488 each contribute to the Mn(2+) site. The tract at residues 464–503 (ENGQQQKYLGVCRLPGPGKRHRRLDIIVVPYCEFACALLY) is DNA-binding. Asparagine 511 is a binding site for dCTP.

It belongs to the DNA polymerase type-X family. Interacts with PCNA. Interacts with PAXX; promoting POLL recruitment to double-strand breaks (DSBs) and stimulation of the end-filling activity of POLL. Interacts with XRCC4; promoting POLL recruitment to double-strand breaks (DSBs) and stimulation of the end-filling activity of POLL. Interacts with NHEJ1/XLF; promoting POLL recruitment to double-strand breaks (DSBs) and stimulation of the end-filling activity of POLL. Mn(2+) is required as a cofactor.

The protein localises to the nucleus. It carries out the reaction DNA(n) + a 2'-deoxyribonucleoside 5'-triphosphate = DNA(n+1) + diphosphate. In terms of biological role, DNA polymerase that functions in several pathways of DNA repair. Involved in base excision repair (BER) responsible for repair of lesions that give rise to abasic (AP) sites in DNA. Also contributes to DNA double-strand break repair by non-homologous end joining and homologous recombination. Has both template-dependent and template-independent (terminal transferase) DNA polymerase activities. Also has a 5'-deoxyribose-5-phosphate lyase (dRP lyase) activity. The protein is DNA polymerase lambda of Mus musculus (Mouse).